A 2225-amino-acid polypeptide reads, in one-letter code: Nonribisomal peptide synthetase notE' (2225 aa).

The segment at 24-59 (TVRESLSSSPSPLPSLASPVSSGSEPPAFGETQPQS) is disordered. Residues 28–49 (SLSSSPSPLPSLASPVSSGSEP) show a composition bias toward low complexity. The tract at residues 83–482 (QERCKEAPQS…GRRDGQLKIR (400 aa)) is adenylation 1. The Carrier 1 domain occupies 614 to 690 (SPTTATELML…EQAQRATPMT (77 aa)). The residue at position 651 (Ser651) is an O-(pantetheine 4'-phosphoryl)serine. The tract at residues 730 to 1142 (EDIYPCTPLQ…DLASPLDQDL (413 aa)) is condensation 1. The segment at 1164 to 1563 (AQAMQQPSRQ…GRRDTQVKVR (400 aa)) is adenylation 2. The Carrier 2 domain occupies 1699–1775 (PVSHGAELRL…DLARCTGEEQ (77 aa)). O-(pantetheine 4'-phosphoryl)serine is present on Ser1736. Residues 1827–2138 (FAFHGEVSID…FILQHQNIDM (312 aa)) are condensation 2.

This sequence belongs to the NRP synthetase family.

The catalysed reaction is L-proline + L-tryptophan + 2 ATP = brevianamide F + 2 AMP + 2 diphosphate + 2 H(+). Its pathway is alkaloid biosynthesis. In terms of biological role, nonribisomal peptide synthetase; part of the gene cluster that mediates the biosynthesis of notoamide, a fungal indole alkaloid that belongs to a family of natural products containing a characteristic bicyclo[2.2.2]diazaoctane core. The first step of notoamide biosynthesis involves coupling of L-proline and L-tryptophan by the bimodular NRPS notE', to produce cyclo-L-tryptophan-L-proline called brevianamide F. The reverse prenyltransferase notF' then acts as a deoxybrevianamide E synthase and converts brevianamide F to deoxybrevianamide E via reverse prenylation at C-2 of the indole ring leading to the bicyclo[2.2.2]diazaoctane core. Deoxybrevianamide E is further hydroxylated at C-6 of the indole ring, likely catalyzed by the cytochrome P450 monooxygenase notG', to yield 6-hydroxy-deoxybrevianamide E. 6-hydroxy-deoxybrevianamide E is a specific substrate of the prenyltransferase notC' for normal prenylation at C-7 to produce 6-hydroxy-7-prenyl-deoxybrevianamide, also called notoamide S. As the proposed pivotal branching point in notoamide biosynthesis, notoamide S can be diverted to notoamide E through an oxidative pyran ring closure putatively catalyzed by either notH' cytochrome P450 monooxygenase or the notD' FAD-linked oxidoreductase. This step would be followed by an indole 2,3-epoxidation-initiated pinacol-like rearrangement catalyzed by the notB' FAD-dependent monooxygenase leading to the formation of notoamide C and notoamide D. On the other hand notoamide S is converted to notoamide T by notH' (or notD'), a bifunctional oxidase that also functions as the intramolecular Diels-Alderase responsible for generation of (-)-notoamide T. To generate antipodal (+)-notoaminide T, notH (or notD) in Aspergillus strain MF297-2 is expected to catalyze a Diels-Alder reaction leading to the opposite stereochemistry. The remaining oxidoreductase notD' (or notH') likely catalyzes the oxidative pyran ring formation to yield (-)-stephacidin A. The FAD-dependent monooxygenase notI' is highly similar to notB' and is predicted to catalyze a similar conversion from (-)-stephacidin A to (+)-notoamide B via the 2,3-epoxidation of (-)-stephacidin A followed by a pinacol-type rearrangement. Finally, it remains unclear which enzyme could be responsible for the final hydroxylation steps leading to notoamide A and sclerotiamide. The protein is Nonribisomal peptide synthetase notE' of Aspergillus versicolor.